We begin with the raw amino-acid sequence, 364 residues long: Natterin-3 (364 aa).

The N-terminal stretch at 1–18 is a signal peptide; the sequence is MKLSVLVVTLLAVSWTSA. Residues 19–42 constitute a propeptide that is removed on maturation; that stretch reads QPETFSIQTKEANMNPEPANIRVA.

The protein belongs to the natterin family. Post-translationally, contains 4 disulfide bonds. Expressed by the venom gland.

Its subcellular location is the secreted. Its activity is regulated as follows. Inhibited by tissue-kallikrein inhibitor TKI and trasylol. Plasma kallikrein inhibitor PKSI527 and classical inhibitors of serine-, metallo-, thiol- or aspartate-peptidases evokes a minor inhibition of the peptide digestion. Its function is as follows. Shows nociceptive, edema-inducing and kininogenase activity with release of kallidin from low molecular weight kininogen. The cleavage occurs at Met-Lys bonds. This Thalassophryne nattereri (Copper Joe toadfish) protein is Natterin-3.